The sequence spans 247 residues: tRNA (guanine-N(1)-)-methyltransferase (247 aa).

S-adenosyl-L-methionine contacts are provided by residues Gly-115 and 134–139 (IGDFVL).

Belongs to the RNA methyltransferase TrmD family. As to quaternary structure, homodimer.

Its subcellular location is the cytoplasm. It carries out the reaction guanosine(37) in tRNA + S-adenosyl-L-methionine = N(1)-methylguanosine(37) in tRNA + S-adenosyl-L-homocysteine + H(+). Specifically methylates guanosine-37 in various tRNAs. The sequence is that of tRNA (guanine-N(1)-)-methyltransferase from Anaeromyxobacter dehalogenans (strain 2CP-C).